We begin with the raw amino-acid sequence, 309 residues long: Homoserine kinase (309 aa).

Position 91–101 (91–101) interacts with ATP; it reads PIGSGLGSSAC.

This sequence belongs to the GHMP kinase family. Homoserine kinase subfamily.

The protein resides in the cytoplasm. The enzyme catalyses L-homoserine + ATP = O-phospho-L-homoserine + ADP + H(+). The protein operates within amino-acid biosynthesis; L-threonine biosynthesis; L-threonine from L-aspartate: step 4/5. Its function is as follows. Catalyzes the ATP-dependent phosphorylation of L-homoserine to L-homoserine phosphate. The chain is Homoserine kinase from Photorhabdus laumondii subsp. laumondii (strain DSM 15139 / CIP 105565 / TT01) (Photorhabdus luminescens subsp. laumondii).